The sequence spans 179 residues: Cytochrome b6-f complex iron-sulfur subunit (179 aa).

A helical transmembrane segment spans residues 20–42 (LLTFGTITGVAAGALYPIVKYFI). Positions 60 to 161 (GNDVIVSQFL…ANVTDNDKVV (102 aa)) constitute a Rieske domain. [2Fe-2S] cluster-binding residues include C107, H109, C125, and H128. A disulfide bridge connects residues C112 and C127.

Belongs to the Rieske iron-sulfur protein family. The 4 large subunits of the cytochrome b6-f complex are cytochrome b6, subunit IV (17 kDa polypeptide, PetD), cytochrome f and the Rieske protein, while the 4 small subunits are PetG, PetL, PetM and PetN. The complex functions as a dimer. Requires [2Fe-2S] cluster as cofactor.

Its subcellular location is the cellular thylakoid membrane. It catalyses the reaction 2 oxidized [plastocyanin] + a plastoquinol + 2 H(+)(in) = 2 reduced [plastocyanin] + a plastoquinone + 4 H(+)(out). Component of the cytochrome b6-f complex, which mediates electron transfer between photosystem II (PSII) and photosystem I (PSI), cyclic electron flow around PSI, and state transitions. This Microcystis aeruginosa (strain NIES-843 / IAM M-2473) protein is Cytochrome b6-f complex iron-sulfur subunit.